The primary structure comprises 637 residues: Neutral ceramidase (637 aa).

Position 34 (H34) interacts with Mg(2+). Zn(2+) contacts are provided by H96 and H204. The Nucleophile role is filled by S256. Zn(2+) contacts are provided by E417 and Y453. Residues D575, D577, and T580 each coordinate Mg(2+).

This sequence belongs to the neutral ceramidase family. Zn(2+) serves as cofactor. Mg(2+) is required as a cofactor.

It carries out the reaction an N-acylsphing-4-enine + H2O = sphing-4-enine + a fatty acid. The enzyme catalyses an N-acylsphinganine + H2O = sphinganine + a fatty acid. The catalysed reaction is an N-acyl-(4R)-4-hydroxysphinganine + H2O = (4R)-hydroxysphinganine + a fatty acid. It catalyses the reaction N-(9Z-octadecenoyl)-sphing-4-enine + H2O = sphing-4-enine + (9Z)-octadecenoate. It carries out the reaction N-(hexanoyl)sphing-4-enine + H2O = hexanoate + sphing-4-enine. The enzyme catalyses N-hexadecanoylsphing-4-enine + H2O = sphing-4-enine + hexadecanoate. The catalysed reaction is N-octadecanoylsphing-4-enine + H2O = sphing-4-enine + octadecanoate. It catalyses the reaction N-eicosanoyl-sphing-4-enine + H2O = eicosanoate + sphing-4-enine. It carries out the reaction N-(15Z-tetracosenoyl)-sphing-4-enine + H2O = (15Z)-tetracosenoate + sphing-4-enine. The enzyme catalyses N-tetracosanoyl-sphing-4-enine + H2O = tetracosanoate + sphing-4-enine. 90% of activity is inhibited by nickel, zinc and calcium ions. Magnesium, cobalt, copper and manganese ions inhibit between 50 and 80% of activity. Its function is as follows. Catalyzes the cleavage of the N-acyl linkage of the ceramides (Cers) to yield sphingosine (Sph) and free fatty acid. Also catalyzes the synthesis of Cers from Sph and fatty acid. Cers containning C6-C24 fatty acids are well hydrolyzed, and Cers with mono unsaturated fatty acids are much more hydrolyzed than those with saturated fatty acids. In Mycobacterium tuberculosis (strain ATCC 25618 / H37Rv), this protein is Neutral ceramidase.